A 218-amino-acid chain; its full sequence is MGQKVNPVGLRIGVIRDWESKWYAGKDYADFLHEDLKIREFINQRLSDASVSKVEIERAANRVNITIHTAKPGMVIGKGGSEVEALRKALNSLTGKRVHINILEIKRADLDAQLVADNIARQLENRISFRRAQKQQIQRTMRAGAQGIKTMVSGRLGGADIARSEYYSEGTVPLHTLRADIDYATSEADTTYGKLGVKVWIYRGEVLPTKKKTEEGGK.

Residues 38 to 106 enclose the KH type-2 domain; the sequence is IREFINQRLS…RVHINILEIK (69 aa).

This sequence belongs to the universal ribosomal protein uS3 family. Part of the 30S ribosomal subunit. Forms a tight complex with proteins S10 and S14.

Functionally, binds the lower part of the 30S subunit head. Binds mRNA in the 70S ribosome, positioning it for translation. In Bacillus licheniformis (strain ATCC 14580 / DSM 13 / JCM 2505 / CCUG 7422 / NBRC 12200 / NCIMB 9375 / NCTC 10341 / NRRL NRS-1264 / Gibson 46), this protein is Small ribosomal subunit protein uS3.